The primary structure comprises 1080 residues: MPAVASVPKELYLSSSLKDLNKKTEVKPEKTSTKNYIHSAQKIFKTAEECRLDRDEERAYVLYMKYVAVYNLIKKRPDFKQQQDYYLSILGPANIKKAIEEAERLSESLKLRYEEAEVRKQLEEKDRREEEQLQQQKRQEMGREDSGAAAKRSVENLLDSKTKTQRINGEKSEGAAAAERGAITAKELYTMMMDKNTSLIIMDARKIQDYQHSCILDSLSVPEEAISPGVTASWIEANLSDDSKDTWKKRGSVDYVVLLDWFSSAKDLLLGTTLRSLKDALFKWESKTVLRHEPLVLEGGYENWLLCYPQFTTNAKVTPPPRSRAEEVSVSLDFTYPSLEEPVPSKLPTQMPPPPIETNEKALLVTDQDEKLRLSTQPALAGPGAAPRAEASPIIQPAPATKSVPQVDRTKKPSVKLPEDHRIKSENTDQSGRVLSDRSTKPVFPSPTTMLTDEEKARIHQETALLMEKNKQEKELWDKQQKEQKEKLRREEQERKAGKTQDADERDSTENQHKAKDGQEKKDSKQTKTEDRELSADGAQEATGTQRQSKSEHEASDAKVPVEGKRCPTSEAQKRPADVSPASVSGELNAGKAQREPLTRARSEEMGRIVPGLPLGWAKFLDPITGTFRYYHSPTNTVHMYPPEMAPSSAPPSTPPTHKVKPQVPAERDREPSKLKRSYSSPDITQALQEEEKRRPAVTPMVNRENKPPCYPKAEISRLSASQIRNLNPVFGGSGPALTGLRNLGNTCYMNSILQCLCNAPHLADYFNRNCYQDDINRSNLLGHKGEVAEEFGIIMKALWTGQYRYISPKDFKVTIGKINDQFAGSSQQDSQELLLFLMDGLHEDLNKADNRKRHKEENNEHLDDLQAAEHAWQKHKQLNESIIVALFQGQFKSTVQCLTCRRRSRTFEAFMYLSLPLASTSKCTLQDCLRLFSKEEKLTDNNRFYCSHCRARRDSLKKIEIWKLPPVLLVHLKRFSYDGRWKQKLQTSVDFPLENLDLSQYVIGPKNSLKKYNLFSVSNHYGGLDGGHYTAYCKNAARQRWFKFDDHEVSDISVSSVRSSAAYILFYTSLGPRITDVAT.

One can recognise an MIT domain in the interval 33–116 (TKNYIHSAQK…ESLKLRYEEA (84 aa)). Over residues 119-173 (RKQLEEKDRREEEQLQQQKRQEMGREDSGAAAKRSVENLLDSKTKTQRINGEKSE) the composition is skewed to basic and acidic residues. The disordered stretch occupies residues 119 to 176 (RKQLEEKDRREEEQLQQQKRQEMGREDSGAAAKRSVENLLDSKTKTQRINGEKSEGAA). Phosphoserine is present on serine 160. Residues 195–313 (KNTSLIIMDA…WLLCYPQFTT (119 aa)) enclose the Rhodanese domain. Positions 379–393 (ALAGPGAAPRAEASP) are enriched in low complexity. 3 disordered regions span residues 379–455 (ALAG…TDEE), 468–605 (EKNK…RSEE), and 642–710 (PPEM…KPPC). Serine 392 carries the phosphoserine modification. The SH3-binding signature appears at 405 to 413 (PQVDRTKKP). Residues 417–427 (LPEDHRIKSEN) are compositionally biased toward basic and acidic residues. Serine 446 carries the post-translational modification Phosphoserine. Composition is skewed to basic and acidic residues over residues 468 to 535 (EKNK…RELS), 549 to 577 (SKSEHEASDAKVPVEGKRCPTSEAQKRPA), and 593 to 605 (AQREPLTRARSEE). Threonine 569 bears the Phosphothreonine mark. The segment covering 678-688 (SYSSPDITQAL) has biased composition (polar residues). Phosphoserine is present on residues serine 680 and serine 681. Residues 739–1071 (TGLRNLGNTC…AAYILFYTSL (333 aa)) form the USP domain. The active-site Nucleophile is the cysteine 748. Threonine 907 is modified (phosphothreonine). Catalysis depends on histidine 1029, which acts as the Proton acceptor.

Belongs to the peptidase C19 family. In terms of assembly, forms a ternary complex with RNF128 and OTUB1. Interacts (via C-terminal UCH catalytic domain) with OTUB1 isoform 1. Interacts with STAM2 (via SH3 domain). Interacts with DNAJB3, EGFR, EPS15, RASGRF1, RNF41, YWHAE, YWHAG and YWHAZ. Interacts with NBR1, RASGRF1, RNF41 and IST1. Associates with the ESCRT-0 complex and with microtubules. Interacts with BIRC6/bruce and KIF23/MKLP1. In terms of processing, phosphorylation of Ser-680 is essential for interaction with YWHAE and for cytosol localization. Undergoes dephosphorylation at Ser-680 in the M phase. Tyrosine-phosphorylated in its N-terminal half in an EGFR-dependent manner. Post-translationally, ubiquitinated. Inactive form is mostly monoubiquitinated, but polyubiquitination happens too. Ubiquitination is increased in EGF-stimulated cells. Ubiquitination of active form is undetectable, suggesting a possibility that USP8 deubiquitinates itself, thereby regulating its own function. As to expression, highly expressed in testis. Expressed at intermediate level in brain.

The protein resides in the cytoplasm. It localises to the nucleus. It is found in the endosome membrane. The protein localises to the cell membrane. It carries out the reaction Thiol-dependent hydrolysis of ester, thioester, amide, peptide and isopeptide bonds formed by the C-terminal Gly of ubiquitin (a 76-residue protein attached to proteins as an intracellular targeting signal).. Functionally, hydrolase that can remove conjugated ubiquitin from proteins and therefore plays an important regulatory role at the level of protein turnover by preventing degradation. Converts both 'Lys-48' an 'Lys-63'-linked ubiquitin chains. Catalytic activity is enhanced in the M phase. Involved in cell proliferation. Required to enter into S phase in response to serum stimulation. May regulate T-cell anergy mediated by RNF128 via the formation of a complex containing RNF128 and OTUB1. Probably regulates the stability of STAM2 and RASGRF1. Regulates endosomal ubiquitin dynamics, cargo sorting, membrane traffic at early endosomes, and maintenance of ESCRT-0 stability. The level of protein ubiquitination on endosomes is essential for maintaining the morphology of the organelle. Deubiquitinates EPS15 and controls tyrosine kinase stability. Removes conjugated ubiquitin from EGFR thus regulating EGFR degradation and downstream MAPK signaling. Involved in acrosome biogenesis through interaction with the spermatid ESCRT-0 complex and microtubules. Deubiquitinates BIRC6/bruce and KIF23/MKLP1. Deubiquitinates BACE1 which inhibits BACE1 lysosomal degradation and modulates BACE-mediated APP cleavage and amyloid-beta formation. This is Ubiquitin carboxyl-terminal hydrolase 8 from Mus musculus (Mouse).